Reading from the N-terminus, the 197-residue chain is Xanthine phosphoribosyltransferase (197 aa).

Xanthine contacts are provided by leucine 20 and threonine 27. 128–132 (ANGQA) contacts 5-phospho-alpha-D-ribose 1-diphosphate. Lysine 156 is a xanthine binding site.

The protein belongs to the purine/pyrimidine phosphoribosyltransferase family. Xpt subfamily. As to quaternary structure, homodimer.

The protein localises to the cytoplasm. It carries out the reaction XMP + diphosphate = xanthine + 5-phospho-alpha-D-ribose 1-diphosphate. The protein operates within purine metabolism; XMP biosynthesis via salvage pathway; XMP from xanthine: step 1/1. Converts the preformed base xanthine, a product of nucleic acid breakdown, to xanthosine 5'-monophosphate (XMP), so it can be reused for RNA or DNA synthesis. The protein is Xanthine phosphoribosyltransferase of Lactococcus lactis subsp. lactis (strain IL1403) (Streptococcus lactis).